The primary structure comprises 268 residues: Undecaprenyl-diphosphatase (268 aa).

The next 6 helical transmembrane spans lie at 39–59, 75–95, 106–126, 179–199, 214–234, and 243–263; these read SETF…LIYK, LPYF…GLWV, LGPV…TEKV, TEFA…FAWI, LTLA…VKWL, and FIPF…LVAL.

It belongs to the UppP family.

The protein resides in the cell inner membrane. The enzyme catalyses di-trans,octa-cis-undecaprenyl diphosphate + H2O = di-trans,octa-cis-undecaprenyl phosphate + phosphate + H(+). In terms of biological role, catalyzes the dephosphorylation of undecaprenyl diphosphate (UPP). Confers resistance to bacitracin. This Methylacidiphilum infernorum (isolate V4) (Methylokorus infernorum (strain V4)) protein is Undecaprenyl-diphosphatase.